The primary structure comprises 250 residues: Proteasome subunit alpha (250 aa).

This sequence belongs to the peptidase T1A family. As to quaternary structure, the 20S proteasome core is composed of 14 alpha and 14 beta subunits that assemble into four stacked heptameric rings, resulting in a barrel-shaped structure. The two inner rings, each composed of seven catalytic beta subunits, are sandwiched by two outer rings, each composed of seven alpha subunits. The catalytic chamber with the active sites is on the inside of the barrel. Has a gated structure, the ends of the cylinder being occluded by the N-termini of the alpha-subunits. Is capped at one or both ends by the proteasome regulatory ATPase, PAN.

It is found in the cytoplasm. Its activity is regulated as follows. The formation of the proteasomal ATPase PAN-20S proteasome complex, via the docking of the C-termini of PAN into the intersubunit pockets in the alpha-rings, triggers opening of the gate for substrate entry. Interconversion between the open-gate and close-gate conformations leads to a dynamic regulation of the 20S proteasome proteolysis activity. In terms of biological role, component of the proteasome core, a large protease complex with broad specificity involved in protein degradation. In Methanobrevibacter smithii (strain ATCC 35061 / DSM 861 / OCM 144 / PS), this protein is Proteasome subunit alpha.